A 218-amino-acid polypeptide reads, in one-letter code: Small ribosomal subunit protein uS3c (218 aa).

The KH type-2 domain maps to 43–118 (IKNYVQKNTK…KFNIAITKIA (76 aa)).

The protein belongs to the universal ribosomal protein uS3 family. Part of the 30S ribosomal subunit.

Its subcellular location is the plastid. It localises to the chloroplast. The sequence is that of Small ribosomal subunit protein uS3c (rps3) from Coffea arabica (Arabian coffee).